A 493-amino-acid chain; its full sequence is Reticulophagy regulator 1 (493 aa).

The tract at residues 1-52 (MASPAPPEPAEQGSPALAAAPQAPPPPTRAPPEEPEGAAPPEEGAAAGAGRQ) is disordered. The Cytoplasmic portion of the chain corresponds to 1–55 (MASPAPPEPAEQGSPALAAAPQAPPPPTRAPPEEPEGAAPPEEGAAAGAGRQVEE). Low complexity predominate over residues 37–52 (GAAPPEEGAAAGAGRQ). The helical transmembrane segment at 56-76 (AAGGVAAVVTWLLGEPALWLG) threads the bilayer. Over 77–87 (GRADELLSWKR) the chain is Lumenal. Positions 80–229 (DELLSWKRPL…LLCAFLCPLF (150 aa)) are reticulon homology domain. A helical transmembrane segment spans residues 88–108 (PLHSLLAFVGANLVFWFLALT). At 109–114 (PWRVYH) the chain is on the cytoplasmic side. A helical membrane pass occupies residues 115 to 135 (LISVMILTRVIMQIIKDMILS). Over 136 to 204 (RTRGAQLWRS…LVCSVCTFFT (69 aa)) the chain is Lumenal. Ser-145 bears the Phosphoserine mark. Ser-147 bears the Phosphoserine; by CAMK2B mark. Residue Ser-149 is modified to Phosphoserine. The chain crosses the membrane as a helical span at residues 205–225 (ILGSYIPGVILSYLLLLCAFL). The Cytoplasmic segment spans residues 226-493 (CPLFKCNDIG…GFLSNLLGGH (268 aa)). Over residues 315-326 (FNLSEGYTPQTD) the composition is skewed to polar residues. Disordered regions lie at residues 315–394 (FNLS…GLSL) and 435–493 (AAPS…LGGH). Basic and acidic residues predominate over residues 330 to 344 (DLDRPSEEVFSRDLS). A Phosphothreonine modification is found at Thr-353. Positions 368–388 (ELKRKKEQLDGGPRRSTEKKS) are enriched in basic and acidic residues. The span at 441–463 (EDTDTEEGDDFELLDQSELDQIE) shows a compositional bias: acidic residues. Residues 449 to 454 (DDFELL) carry the LIR motif motif. Residues 467–486 (GLSQDQEAEAQQNKKSSGFL) are compositionally biased toward polar residues.

This sequence belongs to the RETREG family. As to quaternary structure, homooligomer; oligomerization is enhanced following endoplasmic reticulum stress and is mediated by the reticulon homology domain. Interacts with ATG8 family modifier proteins MAP1LC3A, MAP1LC3B, GABARAP, GABARAPL1 and GABARAPL2. Phosphorylation at Ser-147 by CAMK2B enhances oligomerization and membrane scission and reticulophagy activity.

Its subcellular location is the golgi apparatus. It is found in the cis-Golgi network membrane. The protein localises to the endoplasmic reticulum membrane. Functionally, endoplasmic reticulum (ER)-anchored autophagy regulator which mediates ER delivery into lysosomes through sequestration into autophagosomes. Promotes membrane remodeling and ER scission via its membrane bending capacity and targets the fragments into autophagosomes via interaction with ATG8 family proteins. Active under basal conditions. Required for collagen quality control in a LIR motif-dependent manner. Required for long-term survival of nociceptive and autonomic ganglion neurons. In Bos taurus (Bovine), this protein is Reticulophagy regulator 1 (RETREG1).